Reading from the N-terminus, the 358-residue chain is Alanine racemase (358 aa).

Residue Lys35 is the Proton acceptor; specific for D-alanine of the active site. Lys35 is subject to N6-(pyridoxal phosphate)lysine. Residue Arg130 participates in substrate binding. The Proton acceptor; specific for L-alanine role is filled by Tyr255. Met303 contributes to the substrate binding site.

It belongs to the alanine racemase family. Requires pyridoxal 5'-phosphate as cofactor.

It catalyses the reaction L-alanine = D-alanine. The protein operates within amino-acid biosynthesis; D-alanine biosynthesis; D-alanine from L-alanine: step 1/1. Functionally, catalyzes the interconversion of L-alanine and D-alanine. May also act on other amino acids. The protein is Alanine racemase (alr) of Shewanella baltica (strain OS195).